The primary structure comprises 553 residues: Keratin, type II cytoskeletal 73 (553 aa).

Residues 1-130 (MNRQFTCKSG…DPEIQKVRAQ (130 aa)) form a head region. Positions 131–166 (EREQIKALNNKFASFIDKVRFLEQQNQVLQTKWELL) are coil 1A. The IF rod domain maps to 131-444 (EREQIKALNN…KLLEGEECRM (314 aa)). Positions 167–185 (QQLDLSNCRRNLEPVYEAH) are linker 1. The interval 186 to 277 (ISSLQKQLDS…CLYEGEITQM (92 aa)) is coil 1B. A linker 12 region spans residues 278–301 (QSHISDTSVVLSMDNNRNLDLDSI). Positions 302–440 (IAEVRAQYED…ATYRKLLEGE (139 aa)) are coil 2. Residues 441-539 (ECRMSGEHTN…LGSPSKKTMR (99 aa)) are tail.

Belongs to the intermediate filament family. As to quaternary structure, heterotetramer of two type I and two type II keratins.

Its function is as follows. Has a role in hair formation. Specific component of keratin intermediate filaments in the inner root sheath (IRS) of the hair follicle. This Rattus norvegicus (Rat) protein is Keratin, type II cytoskeletal 73 (Krt73).